Reading from the N-terminus, the 474-residue chain is 3-isopropylmalate dehydratase large subunit (474 aa).

3 residues coordinate [4Fe-4S] cluster: Cys-353, Cys-414, and Cys-417.

The protein belongs to the aconitase/IPM isomerase family. LeuC type 1 subfamily. In terms of assembly, heterodimer of LeuC and LeuD. [4Fe-4S] cluster is required as a cofactor.

It carries out the reaction (2R,3S)-3-isopropylmalate = (2S)-2-isopropylmalate. The protein operates within amino-acid biosynthesis; L-leucine biosynthesis; L-leucine from 3-methyl-2-oxobutanoate: step 2/4. Catalyzes the isomerization between 2-isopropylmalate and 3-isopropylmalate, via the formation of 2-isopropylmaleate. This is 3-isopropylmalate dehydratase large subunit from Pseudomonas paraeruginosa (strain DSM 24068 / PA7) (Pseudomonas aeruginosa (strain PA7)).